The chain runs to 780 residues: E3 UFM1-protein ligase 1 homolog (780 aa).

Positions 403–413 (STSSTNPNHST) are enriched in polar residues. 2 disordered regions span residues 403 to 458 (STSS…RSHI) and 734 to 760 (SSDK…NIDL). 2 stretches are compositionally biased toward basic and acidic residues: residues 443–458 (KDRS…RSHI) and 736–750 (DKQK…KDSD).

Belongs to the UFL1 family.

Functionally, E3 UFM1-protein ligase that mediates ufmylation of target proteins. This chain is E3 UFM1-protein ligase 1 homolog, found in Trichoplax adhaerens (Trichoplax reptans).